Reading from the N-terminus, the 335-residue chain is GTPase Obg (335 aa).

The Obg domain maps to 1–158; that stretch reads MFVDQITLEL…RLVELELKLI (158 aa). One can recognise an OBG-type G domain in the interval 159 to 334; sequence ADIGLVGFPN…LYDLFKSKLS (176 aa). Residues 165–172, 190–194, 215–218, 285–288, and 315–317 each bind GTP; these read GFPNAGKS, FTTLH, DIPG, NKID, and SGL. S172 and T192 together coordinate Mg(2+).

It belongs to the TRAFAC class OBG-HflX-like GTPase superfamily. OBG GTPase family. Monomer. It depends on Mg(2+) as a cofactor.

The protein localises to the cytoplasm. Its function is as follows. An essential GTPase which binds GTP, GDP and possibly (p)ppGpp with moderate affinity, with high nucleotide exchange rates and a fairly low GTP hydrolysis rate. Plays a role in control of the cell cycle, stress response, ribosome biogenesis and in those bacteria that undergo differentiation, in morphogenesis control. The chain is GTPase Obg from Chlamydia trachomatis serovar A (strain ATCC VR-571B / DSM 19440 / HAR-13).